The chain runs to 343 residues: Glycerol-3-phosphate dehydrogenase [NAD(P)+] (343 aa).

Positions 11, 12, 32, 33, and 106 each coordinate NADPH. Lys-106, Gly-136, and Ser-138 together coordinate sn-glycerol 3-phosphate. Ala-140 is a binding site for NADPH. Sn-glycerol 3-phosphate-binding residues include Lys-192, Asp-245, Ser-255, Arg-256, and Asn-257. The Proton acceptor role is filled by Lys-192. Arg-256 contacts NADPH. NADPH contacts are provided by Val-280 and Glu-282.

The protein belongs to the NAD-dependent glycerol-3-phosphate dehydrogenase family.

It is found in the cytoplasm. It carries out the reaction sn-glycerol 3-phosphate + NAD(+) = dihydroxyacetone phosphate + NADH + H(+). The catalysed reaction is sn-glycerol 3-phosphate + NADP(+) = dihydroxyacetone phosphate + NADPH + H(+). The protein operates within membrane lipid metabolism; glycerophospholipid metabolism. Functionally, catalyzes the reduction of the glycolytic intermediate dihydroxyacetone phosphate (DHAP) to sn-glycerol 3-phosphate (G3P), the key precursor for phospholipid synthesis. In Geobacillus thermodenitrificans (strain NG80-2), this protein is Glycerol-3-phosphate dehydrogenase [NAD(P)+].